Here is a 184-residue protein sequence, read N- to C-terminus: uncharacterized protein (184 aa).

The disordered stretch occupies residues 146-177 (HPKTSLAQQPNAKATQPPLSKETLNTAKETDP). Residues 150-172 (SLAQQPNAKATQPPLSKETLNTA) show a composition bias toward polar residues.

This is an uncharacterized protein from Picosynechococcus sp. (strain ATCC 27264 / PCC 7002 / PR-6) (Agmenellum quadruplicatum).